The sequence spans 420 residues: Gamma-glutamyl phosphate reductase (420 aa).

Belongs to the gamma-glutamyl phosphate reductase family.

Its subcellular location is the cytoplasm. The catalysed reaction is L-glutamate 5-semialdehyde + phosphate + NADP(+) = L-glutamyl 5-phosphate + NADPH + H(+). Its pathway is amino-acid biosynthesis; L-proline biosynthesis; L-glutamate 5-semialdehyde from L-glutamate: step 2/2. Catalyzes the NADPH-dependent reduction of L-glutamate 5-phosphate into L-glutamate 5-semialdehyde and phosphate. The product spontaneously undergoes cyclization to form 1-pyrroline-5-carboxylate. The chain is Gamma-glutamyl phosphate reductase from Neisseria gonorrhoeae (strain ATCC 700825 / FA 1090).